Consider the following 287-residue polypeptide: ATP synthase gamma chain (287 aa).

It belongs to the ATPase gamma chain family. As to quaternary structure, F-type ATPases have 2 components, CF(1) - the catalytic core - and CF(0) - the membrane proton channel. CF(1) has five subunits: alpha(3), beta(3), gamma(1), delta(1), epsilon(1). CF(0) has three main subunits: a, b and c.

The protein localises to the cell membrane. Produces ATP from ADP in the presence of a proton gradient across the membrane. The gamma chain is believed to be important in regulating ATPase activity and the flow of protons through the CF(0) complex. This chain is ATP synthase gamma chain, found in Geobacillus stearothermophilus (Bacillus stearothermophilus).